Reading from the N-terminus, the 351-residue chain is Dihydroorotate dehydrogenase (quinone) (351 aa).

FMN-binding positions include 67–71 (AGFDK) and threonine 91. Substrate is bound at residue lysine 71. 116–120 (NAMGF) serves as a coordination point for substrate. Residues asparagine 145 and asparagine 178 each coordinate FMN. A substrate-binding site is contributed by asparagine 178. Serine 181 serves as the catalytic Nucleophile. Residue asparagine 183 coordinates substrate. Lysine 214 and threonine 242 together coordinate FMN. 243 to 244 (NT) is a substrate binding site. Residues glycine 262, glycine 291, and 312–313 (YS) contribute to the FMN site.

This sequence belongs to the dihydroorotate dehydrogenase family. Type 2 subfamily. As to quaternary structure, monomer. Requires FMN as cofactor.

It is found in the cell membrane. It carries out the reaction (S)-dihydroorotate + a quinone = orotate + a quinol. The protein operates within pyrimidine metabolism; UMP biosynthesis via de novo pathway; orotate from (S)-dihydroorotate (quinone route): step 1/1. Its function is as follows. Catalyzes the conversion of dihydroorotate to orotate with quinone as electron acceptor. This is Dihydroorotate dehydrogenase (quinone) from Helicobacter pylori (strain HPAG1).